A 246-amino-acid chain; its full sequence is tRNA (guanine-N(1)-)-methyltransferase (246 aa).

Residues Gly-113 and 133–138 (IGDYVL) each bind S-adenosyl-L-methionine.

It belongs to the RNA methyltransferase TrmD family. Homodimer.

The protein localises to the cytoplasm. It catalyses the reaction guanosine(37) in tRNA + S-adenosyl-L-methionine = N(1)-methylguanosine(37) in tRNA + S-adenosyl-L-homocysteine + H(+). In terms of biological role, specifically methylates guanosine-37 in various tRNAs. This is tRNA (guanine-N(1)-)-methyltransferase from Haemophilus influenzae (strain PittEE).